We begin with the raw amino-acid sequence, 111 residues long: Movement protein TGB2 (111 aa).

Residues 1 to 16 (MSSHQNFLTPPPDHSK) lie on the Cytoplasmic side of the membrane. The helical transmembrane segment at 17–37 (AILAVAVGVGLAIVLHFSLSY) threads the bilayer. At 38 to 72 (KLPSPGDNIHSLPFGGTYRDGTKSIIYNSPHRGPG) the chain is on the lumenal side. A helical transmembrane segment spans residues 73-93 (QSGALPIITVFAIIECTLHVL). Over 94 to 111 (RKRDNPVRPQHSDCPNCS) the chain is Cytoplasmic.

It belongs to the Tymovirales TGBp2 protein family.

The protein localises to the host endoplasmic reticulum membrane. In terms of biological role, plays a role in viral cell-to-cell propagation, by facilitating genome transport to neighboring plant cells through plasmosdesmata,. In Carica papaya (Papaya), this protein is Movement protein TGB2.